An 89-amino-acid chain; its full sequence is Small ribosomal subunit protein uS15 (89 aa).

This sequence belongs to the universal ribosomal protein uS15 family. In terms of assembly, part of the 30S ribosomal subunit. Forms a bridge to the 50S subunit in the 70S ribosome, contacting the 23S rRNA.

Its function is as follows. One of the primary rRNA binding proteins, it binds directly to 16S rRNA where it helps nucleate assembly of the platform of the 30S subunit by binding and bridging several RNA helices of the 16S rRNA. Functionally, forms an intersubunit bridge (bridge B4) with the 23S rRNA of the 50S subunit in the ribosome. This is Small ribosomal subunit protein uS15 from Ectopseudomonas mendocina (strain ymp) (Pseudomonas mendocina).